The sequence spans 109 residues: Large ribosomal subunit protein P1 (109 aa).

The interval 90–109 is disordered; that stretch reads AAAKKEEEEEDDDMGFGLFD.

Belongs to the eukaryotic ribosomal protein P1/P2 family. As to quaternary structure, P1 and P2 exist as dimers at the large ribosomal subunit.

In terms of biological role, plays an important role in the elongation step of protein synthesis. In Trypanosoma cruzi, this protein is Large ribosomal subunit protein P1.